The following is an 842-amino-acid chain: Outer membrane usher protein AggC (842 aa).

The N-terminal stretch at 1–21 (MKTSSFIIVILLCFRIENVIA) is a signal peptide. C819 and C841 form a disulfide bridge.

It belongs to the fimbrial export usher family.

The protein resides in the cell outer membrane. Functionally, involved in the export and assembly of the AAF/I fimbriae subunits across the outer membrane. The sequence is that of Outer membrane usher protein AggC (aggC) from Escherichia coli.